The chain runs to 206 residues: 2,3-bisphosphoglycerate-dependent phosphoglycerate mutase (206 aa).

Substrate contacts are provided by residues 9-16 (RHGQSEWN), 22-23 (TG), R61, 88-91 (ERDY), K99, 115-116 (RR), and 159-160 (GN). H10 serves as the catalytic Tele-phosphohistidine intermediate. E88 serves as the catalytic Proton donor/acceptor.

Belongs to the phosphoglycerate mutase family. BPG-dependent PGAM subfamily. In terms of assembly, homodimer.

It carries out the reaction (2R)-2-phosphoglycerate = (2R)-3-phosphoglycerate. Its pathway is carbohydrate degradation; glycolysis; pyruvate from D-glyceraldehyde 3-phosphate: step 3/5. Catalyzes the interconversion of 2-phosphoglycerate and 3-phosphoglycerate. This is 2,3-bisphosphoglycerate-dependent phosphoglycerate mutase from Azorhizobium caulinodans (strain ATCC 43989 / DSM 5975 / JCM 20966 / LMG 6465 / NBRC 14845 / NCIMB 13405 / ORS 571).